Reading from the N-terminus, the 363-residue chain is Protein-arginine kinase (363 aa).

One can recognise a Phosphagen kinase C-terminal domain in the interval 24–255 (IVLSSRIRLA…QQLIAQERAA (232 aa)). Residues 27–31 (SSRIR), histidine 92, arginine 126, 177–181 (RASVM), and 208–213 (RGTYGE) contribute to the ATP site. An RDXXRA motif of the pArg binding pocket involved in allosteric regulation motif is present at residues 338–343 (RDVRRA).

Belongs to the ATP:guanido phosphotransferase family.

The catalysed reaction is L-arginyl-[protein] + ATP = N(omega)-phospho-L-arginyl-[protein] + ADP + H(+). Appears to be allosterically activated by the binding of pArg-containing polypeptides to the pArg-binding pocket localized in the C-terminal domain of McsB. Its function is as follows. Catalyzes the specific phosphorylation of arginine residues in a large number of proteins. Is part of the bacterial stress response system. Protein arginine phosphorylation has a physiologically important role and is involved in the regulation of many critical cellular processes, such as protein homeostasis, motility, competence, and stringent and stress responses, by regulating gene expression and protein activity. The sequence is that of Protein-arginine kinase from Geobacillus thermodenitrificans (strain NG80-2).